Reading from the N-terminus, the 121-residue chain is Large ribosomal subunit protein bL20 (121 aa).

The protein belongs to the bacterial ribosomal protein bL20 family.

Binds directly to 23S ribosomal RNA and is necessary for the in vitro assembly process of the 50S ribosomal subunit. It is not involved in the protein synthesizing functions of that subunit. This chain is Large ribosomal subunit protein bL20, found in Beijerinckia indica subsp. indica (strain ATCC 9039 / DSM 1715 / NCIMB 8712).